The primary structure comprises 505 residues: ADP-ribosylarginine hydrolase CG2909 (505 aa).

The ADP-D-ribose site is built by R198, G336, G338, G340, V341, W342, W377, D432, N439, E440, G450, and D451.

It catalyses the reaction N(omega)-(ADP-D-ribosyl)-L-arginyl-[protein] + H2O = ADP-D-ribose + L-arginyl-[protein]. The enzyme catalyses N(omega)-(ADP-D-ribosyl)-L-arginine + H2O = ADP-D-ribose + L-arginine. Protein ADP-ribosyl hydrolase that specifically removes mono-ADP-ribosyl modifications from protein arginine residues. This chain is ADP-ribosylarginine hydrolase CG2909, found in Drosophila melanogaster (Fruit fly).